A 77-amino-acid polypeptide reads, in one-letter code: Secapin (77 aa).

Positions 1-32 (MKNYSKNATHLITVLLFSFVVILLIIPSKCEA) are cleaved as a signal peptide. Positions 33 to 52 (VSNDMQPLEARSADLIPEPR) are excised as a propeptide. A disulfide bond links C61 and C72.

The protein belongs to the secapin family. In terms of tissue distribution, expressed by the venom gland.

The protein resides in the secreted. In terms of biological role, nontoxic peptide. This chain is Secapin, found in Vespa velutina nigrithorax (Hornet).